The sequence spans 95 residues: Aspartyl/glutamyl-tRNA(Asn/Gln) amidotransferase subunit C (95 aa).

This sequence belongs to the GatC family. Heterotrimer of A, B and C subunits.

The catalysed reaction is L-glutamyl-tRNA(Gln) + L-glutamine + ATP + H2O = L-glutaminyl-tRNA(Gln) + L-glutamate + ADP + phosphate + H(+). It catalyses the reaction L-aspartyl-tRNA(Asn) + L-glutamine + ATP + H2O = L-asparaginyl-tRNA(Asn) + L-glutamate + ADP + phosphate + 2 H(+). Allows the formation of correctly charged Asn-tRNA(Asn) or Gln-tRNA(Gln) through the transamidation of misacylated Asp-tRNA(Asn) or Glu-tRNA(Gln) in organisms which lack either or both of asparaginyl-tRNA or glutaminyl-tRNA synthetases. The reaction takes place in the presence of glutamine and ATP through an activated phospho-Asp-tRNA(Asn) or phospho-Glu-tRNA(Gln). In Rhizobium johnstonii (strain DSM 114642 / LMG 32736 / 3841) (Rhizobium leguminosarum bv. viciae), this protein is Aspartyl/glutamyl-tRNA(Asn/Gln) amidotransferase subunit C.